Consider the following 91-residue polypeptide: RNA-binding protein Hfq (91 aa).

The 61-residue stretch at 9 to 69 folds into the Sm domain; it reads DRFLNMLRTG…ISTIMPSSFV (61 aa).

It belongs to the Hfq family. In terms of assembly, homohexamer.

In terms of biological role, RNA chaperone that binds small regulatory RNA (sRNAs) and mRNAs to facilitate mRNA translational regulation in response to envelope stress, environmental stress and changes in metabolite concentrations. Also binds with high specificity to tRNAs. This chain is RNA-binding protein Hfq, found in Pseudothermotoga lettingae (strain ATCC BAA-301 / DSM 14385 / NBRC 107922 / TMO) (Thermotoga lettingae).